A 78-amino-acid polypeptide reads, in one-letter code: Cytochrome c oxidase subunit 6b-2 (78 aa).

The CHCH domain maps to 22–65 (TRHCFTRYIEFHRCTTAKGEESNDCERFAKYYRALCPGEWVDKW). Positions 25 to 35 (CFTRYIEFHRC) match the Cx9C motif motif. Cystine bridges form between C25–C57 and C35–C46. Residues 46 to 57 (CERFAKYYRALC) carry the Cx10C motif motif.

The protein belongs to the cytochrome c oxidase subunit 6B (TC 3.D.4.8) family. As to expression, specifically expressed in roots.

The protein localises to the mitochondrion. This protein is one of the nuclear-coded polypeptide chains of cytochrome c oxidase, the terminal oxidase in mitochondrial electron transport. This protein may be one of the heme-binding subunits of the oxidase. In Arabidopsis thaliana (Mouse-ear cress), this protein is Cytochrome c oxidase subunit 6b-2 (COX6B-2).